The chain runs to 203 residues: EF-hand calcium-binding domain-containing protein 8 (203 aa).

The tract at residues 61 to 107 is disordered; that stretch reads SSEKPGESPKPQKMAQPGGSQKKETSRSVPVTDPTSHNSEINQRDQQ. Residues 87-107 are compositionally biased toward polar residues; that stretch reads RSVPVTDPTSHNSEINQRDQQ. 2 EF-hand domains span residues 111–145 and 146–181; these read MHLA…VLSS and MSEE…EFQG.

The sequence is that of EF-hand calcium-binding domain-containing protein 8 (Efcab8) from Mus musculus (Mouse).